The following is a 310-amino-acid chain: MKKIYKRLLFSGLALSMLFFLSGCVQMKNGKPTGEGWVYKFFAAPMGSVIQYLANNLGLGFGFAIIIVTVIVRLLILPLGLSQVRKMTYQSEKMAYLKPVFDPIQERMKNAKTQEEKMAAQTELMQAQRHYGMSMFGGLGCLPLLIQMPFFSALYISTRYTKGIASASFLGIKLGSPNMIITVIIGILYLVQSWVSTLSVPEAQRQQTRNMMFMMPIMMVMISIGAPAGGALYWLVSGIFGLIQQLITNHIIKPKLRKQIDEEFKKNPPKPFKSNARKDITPQANNDKKLITSKKQKSNRNAGKQRHHKQ.

The N-terminal stretch at 1–23 is a signal peptide; that stretch reads MKKIYKRLLFSGLALSMLFFLSG. Cysteine 24 carries the N-palmitoyl cysteine lipid modification. The S-diacylglycerol cysteine moiety is linked to residue cysteine 24. 5 helical membrane-spanning segments follow: residues 34–54, 57–77, 136–156, 180–200, and 220–240; these read GEGW…QYLA, LGLG…LLIL, FGGL…ALYI, IITV…TLSV, and VMIS…SGIF. Positions 263–310 are disordered; the sequence is EFKKNPPKPFKSNARKDITPQANNDKKLITSKKQKSNRNAGKQRHHKQ. The segment covering 276–290 has biased composition (basic and acidic residues); it reads ARKDITPQANNDKKL. Basic residues predominate over residues 291-310; it reads ITSKKQKSNRNAGKQRHHKQ.

Belongs to the OXA1/ALB3/YidC family. Type 2 subfamily.

The protein localises to the cell membrane. Its function is as follows. Required for the insertion and/or proper folding and/or complex formation of integral membrane proteins into the membrane. Involved in integration of membrane proteins that insert both dependently and independently of the Sec translocase complex, as well as at least some lipoproteins. Partially complements an E.coli yidC depletion experiment. The chain is Membrane protein insertase YidC 2 (yidC2) from Streptococcus mutans serotype c (strain ATCC 700610 / UA159).